We begin with the raw amino-acid sequence, 586 residues long: NudC domain-containing protein 1 (586 aa).

The segment at 259–278 (KDQPESSEDEKMDEDNKREP) is disordered. The CS domain occupies 275–364 (KREPLYNWHQ…EPGSTWAELV (90 aa)).

Its subcellular location is the cytoplasm. The protein resides in the nucleus. This chain is NudC domain-containing protein 1, found in Xenopus tropicalis (Western clawed frog).